Consider the following 452-residue polypeptide: Probable ECA polymerase (452 aa).

The next 11 helical transmembrane spans lie at 6 to 26, 37 to 57, 63 to 83, 118 to 138, 155 to 175, 181 to 201, 207 to 227, 228 to 248, 341 to 361, 378 to 398, and 410 to 430; these read FSGLLVVWLLSTLFIATLTWF, VFFSLLFLLTFFFGFPLTSVL, VGVAPPEILLQALLSAACFYG, VILMGIALVSVAIFFMHNGFL, GVALKRFFYFFIPAMLVVYFL, AWLFFLVSTVAFGLLTYMIVG, IIIAFAIFLFIGIIRGWISLW, MLAAAGVLGIVGMFWLALKRY, LVVMGGALFIPLGAIVVGLII, YKAAILHSFCFGAIFNMIVLA, and VFFLVVFGASLLVAKLLFWLF.

This sequence belongs to the WzyE family. In terms of assembly, probably part of a complex composed of WzxE, WzyE and WzzE.

The protein localises to the cell inner membrane. It functions in the pathway bacterial outer membrane biogenesis; enterobacterial common antigen biosynthesis. Its function is as follows. Probably involved in the polymerization of enterobacterial common antigen (ECA) trisaccharide repeat units. This is Probable ECA polymerase from Salmonella choleraesuis (strain SC-B67).